The primary structure comprises 863 residues: Leucine--tRNA ligase (863 aa).

The 'HIGH' region motif lies at 42–52; that stretch reads PYPSGRLHMGH. The 'KMSKS' region signature appears at 622–626; it reads KMSKS. An ATP-binding site is contributed by lysine 625.

It belongs to the class-I aminoacyl-tRNA synthetase family.

Its subcellular location is the cytoplasm. It carries out the reaction tRNA(Leu) + L-leucine + ATP = L-leucyl-tRNA(Leu) + AMP + diphosphate. The protein is Leucine--tRNA ligase of Shewanella sediminis (strain HAW-EB3).